The primary structure comprises 99 residues: uncharacterized protein (99 aa).

This is an uncharacterized protein from Mycobacterium tuberculosis (strain CDC 1551 / Oshkosh).